Reading from the N-terminus, the 61-residue chain is Alpha-conotoxin PnIB (61 aa).

A signal peptide spans 1 to 21 (MGMRMMFTVFLLVVLATTVVS). Positions 22–44 (FTSDRASDDGNAAASDLIALTIK) are excised as a propeptide. Intrachain disulfides connect Cys46-Cys52 and Cys47-Cys60. The interval 48-50 (SLP) is ser-Xaa-Pro motif, crucial for potent interaction with nAChR. Tyr59 is subject to Sulfotyrosine. Cys60 carries the cysteine amide modification.

The protein belongs to the conotoxin A superfamily. Expressed by the venom duct.

The protein resides in the secreted. In terms of biological role, alpha-conotoxins act on postsynaptic membranes, they bind to the nicotinic acetylcholine receptors (nAChR) and thus inhibit them. This toxin blocks mammalian nAChRs (alpha-7/CHRNA7 &gt; alpha-3-beta-2/CHRNA3-CHRNB2). The protein is Alpha-conotoxin PnIB of Conus pennaceus (Feathered cone).